The primary structure comprises 474 residues: Probable periplasmic serine endoprotease DegP-like (474 aa).

The signal sequence occupies residues 1–25; sequence MRNLKSVTPLLMAALLWGQSLLAQA. Catalysis depends on charge relay system residues His113, Asp143, and Ser216. Residues 214–216 and 271–275 each bind substrate; these read GNS and LGVVI. 2 PDZ domains span residues 260-351 and 357-463; these read LKAD…VRDG and KVTI…LRQG.

Belongs to the peptidase S1C family.

The protein localises to the periplasm. It carries out the reaction Acts on substrates that are at least partially unfolded. The cleavage site P1 residue is normally between a pair of hydrophobic residues, such as Val-|-Val.. Might be efficient in the degradation of transiently denatured and unfolded proteins which accumulate in the periplasm following stress conditions. The polypeptide is Probable periplasmic serine endoprotease DegP-like (Ectopseudomonas mendocina (strain ymp) (Pseudomonas mendocina)).